The following is a 130-amino-acid chain: Metastasis-suppressor KiSS-1 (130 aa).

Positions 1-19 are cleaved as a signal peptide; that stretch reads MISMASWQLLLLLCVATYG. Residues 49-82 are disordered; the sequence is KESRYAESKPGSAGLRARRSSPCPPVEGPAGRQR. An intrachain disulfide couples C71 to C85. Y110 is subject to Phosphotyrosine. Residues 110–119 form an essential for receptor binding and receptor activation region; it reads YNWNSFGLRY. A Tyrosine amide modification is found at Y119.

Belongs to the KISS1 family. As to expression, weak in all tissue types with highest levels in lung and 15- 17-day embryos. Expressed in areas of the hypothalamus implicated in the neuroendocrine regulation of gonadotropin secretion, including the anteroventral periventricular nucleus, the periventricular nucleus, and the arcuate nucleus.

The protein localises to the secreted. Functionally, metastasis suppressor protein. May regulate events downstream of cell-matrix adhesion, perhaps involving cytoskeletal reorganization. Generates a C-terminally amidated peptide, metastin which functions as the endogenous ligand of the G-protein coupled receptor GPR54. Activation of the receptor inhibits cell proliferation and cell migration, key characteristics of tumor metastasis. The receptor is also essential for normal gonadotropin-released hormone physiology and for puberty. The hypothalamic KiSS1/GPR54 system is a pivotal factor in central regulation of the gonadotropic axis at puberty and in adulthood. Intracerebroventricular administration induces an increase in serum LH and FSH levels in prepubertal male and female as well as in adult animals. The protein is Metastasis-suppressor KiSS-1 (Kiss1) of Mus musculus (Mouse).